The primary structure comprises 502 residues: MSIKAEEISTLIKQQIQNYQSEIEVHDVGTVIQVGDGIARVHGLDNCMAGELVEFSNGVLGMAQNLEESNVGIVILGPYRDIREGDEVKRTGRIMEVPVGEELIGRIVNPLGQPVDGLGPILTSKTRPIESQAPGVMDRKSVHEPLQTGIKAIDALIPIGRGQRELIIGDRQTGKTSVAIDTILNQKDQDMICVYVAIGQKESTVRGVVETLRKHGALDYTIVVTASASQPAPLLYLAPYAGVTMGEEFMYNGKHVLVVYDDLSKQAAAYRELSLLLRRPPGREAFPGDVFYLHSRLLERAAKLSDAKGAGSITALPFVETQAGDISAYIPTNVISITDGQIFLQSDLFFSGVRPAINAGLSVSRVGGSAQIKAMKKVAGTLRLDLASYRELEAFAQFGSDLDQATQAKLNRGARTVEVLKQDLNKPLPVEKQVAILYALTKGYLDDIPVADIRRFEEEYYMYLDQNHKDLLDGIAKTGNLPADEDFKAAIEGFKRTFAPSN.

ATP is bound at residue 169–176; it reads GDRQTGKT.

This sequence belongs to the ATPase alpha/beta chains family. In terms of assembly, F-type ATPases have 2 components, CF(1) - the catalytic core - and CF(0) - the membrane proton channel. CF(1) has five subunits: alpha(3), beta(3), gamma(1), delta(1), epsilon(1). CF(0) has three main subunits: a(1), b(2) and c(9-12). The alpha and beta chains form an alternating ring which encloses part of the gamma chain. CF(1) is attached to CF(0) by a central stalk formed by the gamma and epsilon chains, while a peripheral stalk is formed by the delta and b chains.

Its subcellular location is the cell membrane. The catalysed reaction is ATP + H2O + 4 H(+)(in) = ADP + phosphate + 5 H(+)(out). Functionally, produces ATP from ADP in the presence of a proton gradient across the membrane. The alpha chain is a regulatory subunit. This chain is ATP synthase subunit alpha, found in Bacillus velezensis (strain DSM 23117 / BGSC 10A6 / LMG 26770 / FZB42) (Bacillus amyloliquefaciens subsp. plantarum).